Here is a 184-residue protein sequence, read N- to C-terminus: Large ribosomal subunit protein uL6 (184 aa).

It belongs to the universal ribosomal protein uL6 family. Part of the 50S ribosomal subunit.

Its function is as follows. This protein binds to the 23S rRNA, and is important in its secondary structure. It is located near the subunit interface in the base of the L7/L12 stalk, and near the tRNA binding site of the peptidyltransferase center. This is Large ribosomal subunit protein uL6 from Pyrococcus abyssi (strain GE5 / Orsay).